The sequence spans 240 residues: Methylthioribulose-1-phosphate dehydratase (240 aa).

Polar residues predominate over residues 1 to 17 (MAQEVENNNNDHLVQSS). The disordered stretch occupies residues 1–20 (MAQEVENNNNDHLVQSSDPE). Cysteine 100 is a substrate binding site. Residues histidine 117 and histidine 119 each contribute to the Zn(2+) site. The Proton donor/acceptor role is filled by glutamate 146. Histidine 202 lines the Zn(2+) pocket.

It belongs to the aldolase class II family. MtnB subfamily. The cofactor is Zn(2+).

The protein localises to the cytoplasm. It catalyses the reaction 5-(methylsulfanyl)-D-ribulose 1-phosphate = 5-methylsulfanyl-2,3-dioxopentyl phosphate + H2O. Its pathway is amino-acid biosynthesis; L-methionine biosynthesis via salvage pathway; L-methionine from S-methyl-5-thio-alpha-D-ribose 1-phosphate: step 2/6. Its function is as follows. Catalyzes the dehydration of methylthioribulose-1-phosphate (MTRu-1-P) into 2,3-diketo-5-methylthiopentyl-1-phosphate (DK-MTP-1-P). The chain is Methylthioribulose-1-phosphate dehydratase from Neosartorya fischeri (strain ATCC 1020 / DSM 3700 / CBS 544.65 / FGSC A1164 / JCM 1740 / NRRL 181 / WB 181) (Aspergillus fischerianus).